The primary structure comprises 94 residues: Small ribosomal subunit protein uS19 (94 aa).

This sequence belongs to the universal ribosomal protein uS19 family.

In terms of biological role, protein S19 forms a complex with S13 that binds strongly to the 16S ribosomal RNA. The chain is Small ribosomal subunit protein uS19 from Wolbachia pipientis wMel.